Reading from the N-terminus, the 479-residue chain is Replication factor C large subunit (479 aa).

Residue 56 to 63 (GPPGVGKT) coordinates ATP. A compositionally biased stretch (basic and acidic residues) spans 435 to 461 (LGEKPLEPQEAKARRRGEKASRDEGRK). The tract at residues 435–479 (LGEKPLEPQEAKARRRGEKASRDEGRKAGKRERKGVGLDFFLGEQ) is disordered.

This sequence belongs to the activator 1 small subunits family. RfcL subfamily. Heteromultimer composed of small subunits (RfcS) and large subunits (RfcL).

Functionally, part of the RFC clamp loader complex which loads the PCNA sliding clamp onto DNA. The polypeptide is Replication factor C large subunit (Aeropyrum pernix (strain ATCC 700893 / DSM 11879 / JCM 9820 / NBRC 100138 / K1)).